Consider the following 102-residue polypeptide: Omega-hexatoxin-Hi2a (102 aa).

An N-terminal signal peptide occupies residues 1–23 (MKFSKLSLTLALILTQALLVVCG). Residues 24-56 (KINEDFMENGLESHALHDEIRKPIDTEKADAER) constitute a propeptide that is removed on maturation. Intrachain disulfides connect Cys61–Cys75, Cys68–Cys81, and Cys74–Cys86. At Leu98 the chain carries Leucine amide. Residues 100 to 102 (RAL) constitute a propeptide that is removed on maturation.

Belongs to the neurotoxin 15 family. 02 (omega-actx) subfamily. In terms of tissue distribution, expressed by the venom gland.

Its subcellular location is the secreted. Its function is as follows. Potent inhibitor of insect, but not mammalian, voltage-gated calcium channels (Cav). The protein is Omega-hexatoxin-Hi2a of Hadronyche infensa (Fraser island funnel-web spider).